Consider the following 253-residue polypeptide: Glucosamine-6-phosphate deaminase (253 aa).

Asp-65 (proton acceptor; for enolization step) is an active-site residue. Catalysis depends on Asn-133, which acts as the For ring-opening step. Catalysis depends on His-135, which acts as the Proton acceptor; for ring-opening step. Glu-140 functions as the For ring-opening step in the catalytic mechanism.

The protein belongs to the glucosamine/galactosamine-6-phosphate isomerase family. NagB subfamily.

It catalyses the reaction alpha-D-glucosamine 6-phosphate + H2O = beta-D-fructose 6-phosphate + NH4(+). The protein operates within amino-sugar metabolism; N-acetylneuraminate degradation; D-fructose 6-phosphate from N-acetylneuraminate: step 5/5. Its function is as follows. Catalyzes the reversible isomerization-deamination of glucosamine 6-phosphate (GlcN6P) to form fructose 6-phosphate (Fru6P) and ammonium ion. The polypeptide is Glucosamine-6-phosphate deaminase (Corynebacterium glutamicum (strain ATCC 13032 / DSM 20300 / JCM 1318 / BCRC 11384 / CCUG 27702 / LMG 3730 / NBRC 12168 / NCIMB 10025 / NRRL B-2784 / 534)).